We begin with the raw amino-acid sequence, 288 residues long: Ribosomal RNA small subunit methyltransferase A (288 aa).

S-adenosyl-L-methionine is bound by residues asparagine 28, leucine 30, glycine 55, glutamate 76, aspartate 101, and asparagine 130.

This sequence belongs to the class I-like SAM-binding methyltransferase superfamily. rRNA adenine N(6)-methyltransferase family. RsmA subfamily.

It is found in the cytoplasm. It catalyses the reaction adenosine(1518)/adenosine(1519) in 16S rRNA + 4 S-adenosyl-L-methionine = N(6)-dimethyladenosine(1518)/N(6)-dimethyladenosine(1519) in 16S rRNA + 4 S-adenosyl-L-homocysteine + 4 H(+). Its function is as follows. Specifically dimethylates two adjacent adenosines (A1518 and A1519) in the loop of a conserved hairpin near the 3'-end of 16S rRNA in the 30S particle. May play a critical role in biogenesis of 30S subunits. This chain is Ribosomal RNA small subunit methyltransferase A, found in Moorella thermoacetica (strain ATCC 39073 / JCM 9320).